A 241-amino-acid polypeptide reads, in one-letter code: Pyridoxal phosphate phosphatase PHOSPHO2 (241 aa).

D8 serves as the catalytic Nucleophile. D8 and D10 together coordinate Mg(2+). D10 (proton donor) is an active-site residue. Substrate-binding residues include D19 and D99. D179 lines the Mg(2+) pocket.

This sequence belongs to the HAD-like hydrolase superfamily. PHOSPHO family. The cofactor is Mg(2+).

The enzyme catalyses pyridoxal 5'-phosphate + H2O = pyridoxal + phosphate. Phosphatase that has high activity toward pyridoxal 5'-phosphate (PLP). Also active at much lower level toward pyrophosphate, phosphoethanolamine (PEA), phosphocholine (PCho), phospho-l-tyrosine, fructose-6-phosphate, p-nitrophenyl phosphate, and h-glycerophosphate. This is Pyridoxal phosphate phosphatase PHOSPHO2 (PHOSPHO2) from Bos taurus (Bovine).